A 52-amino-acid chain; its full sequence is ATP synthase protein 8 (52 aa).

Residues 7 to 27 form a helical membrane-spanning segment; the sequence is MKWFLIYFIYLLIFYLFIMLI.

This sequence belongs to the ATPase protein 8 family. As to quaternary structure, F-type ATPases have 2 components, CF(1) - the catalytic core - and CF(0) - the membrane proton channel.

It is found in the mitochondrion membrane. Functionally, mitochondrial membrane ATP synthase (F(1)F(0) ATP synthase or Complex V) produces ATP from ADP in the presence of a proton gradient across the membrane which is generated by electron transport complexes of the respiratory chain. F-type ATPases consist of two structural domains, F(1) - containing the extramembraneous catalytic core and F(0) - containing the membrane proton channel, linked together by a central stalk and a peripheral stalk. During catalysis, ATP synthesis in the catalytic domain of F(1) is coupled via a rotary mechanism of the central stalk subunits to proton translocation. Part of the complex F(0) domain. Minor subunit located with subunit a in the membrane. The protein is ATP synthase protein 8 (mt:ATPase8) of Apis mellifera ligustica (Common honeybee).